The sequence spans 930 residues: MKLKETLNLGKTAFPMRAGLPNKEPIWQKEWDQAKLYQRRQELNEGKPHFILHDGPPYANGNIHVGHAMNKISKDIIVRSKSMAGYYAPYIPGWDTHGLPIEQVLAKQGVKRKELDLVEYLNMCRDYALSQVEKQKEDFKRLGVSGDWENPYVTLTPDYEAAQIRVFGEMAKKGYIYRGAKPVYWSWSSESALAEAEIEYHDLVSTSLYYANRVKDGKGVLDTDTYIVVWTTTPFTITASRGLTVGADIDYVVVQPAGESRKFVVASELLNSLSEKFGWADVQVLATYRGQELNHIVTVHPWDTAVDELVILGDHVTTDSGTGIVHTAPGFGEDDYNVGVANDLEVFVTVNERGIMMENAGPDFAGQFYDKVAPTVIEKLGDLLLAQEEISHSYPFDWRTKKPIIWRAVPQWFASVSKFRQEILDEIEKVKFHSEWGKVRLYNMIRDRGDWVISRQRAWGVPLPIFYAEDGTPIMTAETIEHVAQLFEEHGSIVWWKREAKDLLPEGFTHPGSPNGEFTKETDIMDVWFDSGSSWNGVVVNRPELTYPADLYLEGSDQYRGWFNSSLITSVANHGVAPYKQILSQGFALDGKGEKMSKSLGNTIAPSDVEKQFGAEILRLWVTSVDSSNDVRISMDILSQVSETYRKIRNTLRFLIANTSDFNPVEDAVAYEELRSVDKYMTIRFNQLVETIRKAYADFEFLTIYKAIVNFVTVDLSAFYLDFAKDIVYIEAAKSLERRQMQTVFYDVLVKITKLLTPILPHTAEEIWSYLEHEEEEFVQLSELPEAQTFPNQEEILDTWSAFMDFRSQAQKALEEARNEKVIGKSLEAHLTVYPNEVIKTLLEAVNSDVAQLLIVSQLTIAEGPAPEGALVFEDVAFVVEHAQGQVCDRCRRIDTTVQERSYQALVCDHCAEILEENFAQAVSEGFEAN.

The 'HIGH' region signature appears at 57–67 (PYANGNIHVGH). Glutamate 554 serves as a coordination point for L-isoleucyl-5'-AMP. Residues 595–599 (KMSKS) carry the 'KMSKS' region motif. Lysine 598 is an ATP binding site. The Zn(2+) site is built by cysteine 888, cysteine 891, cysteine 908, and cysteine 911.

This sequence belongs to the class-I aminoacyl-tRNA synthetase family. IleS type 1 subfamily. In terms of assembly, monomer. Zn(2+) serves as cofactor.

It is found in the cytoplasm. The catalysed reaction is tRNA(Ile) + L-isoleucine + ATP = L-isoleucyl-tRNA(Ile) + AMP + diphosphate. Functionally, catalyzes the attachment of isoleucine to tRNA(Ile). As IleRS can inadvertently accommodate and process structurally similar amino acids such as valine, to avoid such errors it has two additional distinct tRNA(Ile)-dependent editing activities. One activity is designated as 'pretransfer' editing and involves the hydrolysis of activated Val-AMP. The other activity is designated 'posttransfer' editing and involves deacylation of mischarged Val-tRNA(Ile). This Streptococcus sanguinis (strain SK36) protein is Isoleucine--tRNA ligase.